A 512-amino-acid chain; its full sequence is D-alanine--D-alanyl carrier protein ligase (512 aa).

ATP is bound at residue 152–153 (TS). Asp-199 is a binding site for D-alanine. An ATP-binding site is contributed by 294 to 299 (NAYGPT). Residue Val-303 participates in D-alanine binding. Residues Asp-385, 397 to 400 (YGGR), and Lys-499 each bind ATP. Position 499 (Lys-499) interacts with D-alanine.

The protein belongs to the ATP-dependent AMP-binding enzyme family. DltA subfamily.

It is found in the cytoplasm. The enzyme catalyses holo-[D-alanyl-carrier protein] + D-alanine + ATP = D-alanyl-[D-alanyl-carrier protein] + AMP + diphosphate. It participates in cell wall biogenesis; lipoteichoic acid biosynthesis. Catalyzes the first step in the D-alanylation of lipoteichoic acid (LTA), the activation of D-alanine and its transfer onto the D-alanyl carrier protein (Dcp) DltC. In an ATP-dependent two-step reaction, forms a high energy D-alanyl-AMP intermediate, followed by transfer of the D-alanyl residue as a thiol ester to the phosphopantheinyl prosthetic group of the Dcp. D-alanylation of LTA plays an important role in modulating the properties of the cell wall in Gram-positive bacteria, influencing the net charge of the cell wall. In Streptococcus pyogenes serotype M28 (strain MGAS6180), this protein is D-alanine--D-alanyl carrier protein ligase.